The primary structure comprises 294 residues: Elongation factor Ts (294 aa).

Residues 81–84 form an involved in Mg(2+) ion dislocation from EF-Tu region; the sequence is TDFV.

The protein belongs to the EF-Ts family.

The protein localises to the cytoplasm. Associates with the EF-Tu.GDP complex and induces the exchange of GDP to GTP. It remains bound to the aminoacyl-tRNA.EF-Tu.GTP complex up to the GTP hydrolysis stage on the ribosome. This Levilactobacillus brevis (strain ATCC 367 / BCRC 12310 / CIP 105137 / JCM 1170 / LMG 11437 / NCIMB 947 / NCTC 947) (Lactobacillus brevis) protein is Elongation factor Ts.